We begin with the raw amino-acid sequence, 237 residues long: MKRIRDVLSHENSNNTNYSDTNDTDYNDSHKLEKQYYEIDYEKFLLDSDIQEKYTKHIEYMLNKLLNKYKNKFVKKIIYDNLITNIINDFSDIIIDLSNQLDYVKQLTNKDFANKQIIDNMLIFLVKYEKILHSALARFVDIYFMRRLLDKKYVTNAVVYTGAYHSVTYIYLLSKIGFQMTHIVKSMVQSVAVANIVLNDIDDVSYRRNIYNLMYFFENNPFSQQCIDVSKFPKSFL.

The segment at 1–26 (MKRIRDVLSHENSNNTNYSDTNDTDY) is disordered. A compositionally biased stretch (low complexity) spans 12-21 (NSNNTNYSDT).

This sequence belongs to the mimivirus R160 family.

This is an uncharacterized protein from Acanthamoeba polyphaga mimivirus (APMV).